Here is a 91-residue protein sequence, read N- to C-terminus: MDLFKSFGGKNNSKNIAKERLQLLLVHDRADVSPKFLEMIKEDILNVISNYVDIDEAGLNVEITKEKRSDNTYIPALHANIPIKKMKQVIR.

The protein belongs to the MinE family.

Its function is as follows. Prevents the cell division inhibition by proteins MinC and MinD at internal division sites while permitting inhibition at polar sites. This ensures cell division at the proper site by restricting the formation of a division septum at the midpoint of the long axis of the cell. This is Cell division topological specificity factor from Thermoanaerobacter pseudethanolicus (strain ATCC 33223 / 39E) (Clostridium thermohydrosulfuricum).